The following is a 487-amino-acid chain: Bifunctional protein GlmU (487 aa).

The pyrophosphorylase stretch occupies residues 1–232 (MAVIVLAAGA…AAELAGVNDR (232 aa)). Residues 6–9 (LAAG), Lys-20, Gln-77, and 82–83 (GT) each bind UDP-N-acetyl-alpha-D-glucosamine. Asp-107 contributes to the Mg(2+) binding site. UDP-N-acetyl-alpha-D-glucosamine contacts are provided by Gly-142, Glu-157, Asn-172, and Asn-230. Asn-230 provides a ligand contact to Mg(2+). The linker stretch occupies residues 233-253 (VQLAAAGAELNRRTVTAAMRG). The N-acetyltransferase stretch occupies residues 254–487 (GATIVDPATT…PTSTPQADQE (234 aa)). UDP-N-acetyl-alpha-D-glucosamine contacts are provided by Arg-335 and Lys-353. His-365 (proton acceptor) is an active-site residue. Positions 368 and 379 each coordinate UDP-N-acetyl-alpha-D-glucosamine. Acetyl-CoA-binding positions include Ala-382, 388–389 (NY), Ser-407, and Ala-425. Residues 453-487 (AKKRPGTPAAEAGEAAAKRVAEGGSPTSTPQADQE) are disordered. Over residues 477–487 (SPTSTPQADQE) the composition is skewed to polar residues.

This sequence in the N-terminal section; belongs to the N-acetylglucosamine-1-phosphate uridyltransferase family. It in the C-terminal section; belongs to the transferase hexapeptide repeat family. In terms of assembly, homotrimer. The cofactor is Mg(2+).

The protein resides in the cytoplasm. It catalyses the reaction alpha-D-glucosamine 1-phosphate + acetyl-CoA = N-acetyl-alpha-D-glucosamine 1-phosphate + CoA + H(+). It carries out the reaction N-acetyl-alpha-D-glucosamine 1-phosphate + UTP + H(+) = UDP-N-acetyl-alpha-D-glucosamine + diphosphate. It participates in nucleotide-sugar biosynthesis; UDP-N-acetyl-alpha-D-glucosamine biosynthesis; N-acetyl-alpha-D-glucosamine 1-phosphate from alpha-D-glucosamine 6-phosphate (route II): step 2/2. The protein operates within nucleotide-sugar biosynthesis; UDP-N-acetyl-alpha-D-glucosamine biosynthesis; UDP-N-acetyl-alpha-D-glucosamine from N-acetyl-alpha-D-glucosamine 1-phosphate: step 1/1. It functions in the pathway bacterial outer membrane biogenesis; LPS lipid A biosynthesis. In terms of biological role, catalyzes the last two sequential reactions in the de novo biosynthetic pathway for UDP-N-acetylglucosamine (UDP-GlcNAc). The C-terminal domain catalyzes the transfer of acetyl group from acetyl coenzyme A to glucosamine-1-phosphate (GlcN-1-P) to produce N-acetylglucosamine-1-phosphate (GlcNAc-1-P), which is converted into UDP-GlcNAc by the transfer of uridine 5-monophosphate (from uridine 5-triphosphate), a reaction catalyzed by the N-terminal domain. This Corynebacterium jeikeium (strain K411) protein is Bifunctional protein GlmU.